Here is a 572-residue protein sequence, read N- to C-terminus: 2-succinyl-5-enolpyruvyl-6-hydroxy-3-cyclohexene-1-carboxylate synthase (572 aa).

Belongs to the TPP enzyme family. MenD subfamily. Homodimer. The cofactor is Mg(2+). Mn(2+) is required as a cofactor. Requires thiamine diphosphate as cofactor.

The catalysed reaction is isochorismate + 2-oxoglutarate + H(+) = 5-enolpyruvoyl-6-hydroxy-2-succinyl-cyclohex-3-ene-1-carboxylate + CO2. Its pathway is quinol/quinone metabolism; 1,4-dihydroxy-2-naphthoate biosynthesis; 1,4-dihydroxy-2-naphthoate from chorismate: step 2/7. It participates in quinol/quinone metabolism; menaquinone biosynthesis. Catalyzes the thiamine diphosphate-dependent decarboxylation of 2-oxoglutarate and the subsequent addition of the resulting succinic semialdehyde-thiamine pyrophosphate anion to isochorismate to yield 2-succinyl-5-enolpyruvyl-6-hydroxy-3-cyclohexene-1-carboxylate (SEPHCHC). The sequence is that of 2-succinyl-5-enolpyruvyl-6-hydroxy-3-cyclohexene-1-carboxylate synthase from Vibrio campbellii (strain ATCC BAA-1116).